The chain runs to 287 residues: Phospholipid phosphatase 2 (287 aa).

Over 1 to 4 the chain is Cytoplasmic; it reads MERR. A helical membrane pass occupies residues 5–25; that stretch reads WVFVLLDVLCVLVAALPCAIL. Topologically, residues 26 to 51 are lumenal; it reads TFVNTPYKRGFYCGDDSIRYPYRPDT. A helical transmembrane segment spans residues 52 to 72; that stretch reads ITHGLMAGVIITATVILVSAG. Topologically, residues 73-87 are cytoplasmic; sequence EAYLVYTDRLYSRSD. Residues 88–108 traverse the membrane as a helical segment; the sequence is FNNYLAALYKVVGTFLFGAAV. Residues 109–161 are Lumenal-facing; it reads SQSLTDLAKYMTGRLRPNFLAVCDPDWSRVNCSAYVQVEVCRGSSANVTESRL. The segment at 117-125 is phosphatase sequence motif I; the sequence is KYMTGRLRP. Residues Asn-139 and Asn-155 are each glycosylated (N-linked (GlcNAc...) asparagine). The helical transmembrane segment at 162–182 threads the bilayer; sequence SFYSGHSSFGMYCMVFLALYV. A phosphatase sequence motif II region spans residues 164–167; it reads YSGH. Residue His-167 is the Proton donors of the active site. At 183 to 193 the chain is on the cytoplasmic side; sequence QARLCWKWARL. A helical membrane pass occupies residues 194 to 211; sequence LRPTVQFFLVAFALYVGY. Residues 212-218 lie on the Lumenal side of the membrane; the sequence is TRVSDHK. The phosphatase sequence motif III stretch occupies residues 212 to 223; sequence TRVSDHKHHWSD. The Nucleophile role is filled by His-219. Residues 219 to 239 form a helical membrane-spanning segment; the sequence is HHWSDVLVGLLQGALVASLTV. At 240-287 the chain is on the cytoplasmic side; the sequence is RYISDFFKARPPQHCPEEEDLERKPSLSLTLALGETDCNHYGYPVSSS.

The protein belongs to the PA-phosphatase related phosphoesterase family. As to quaternary structure, forms functional homodimers and homooligomers. Can also form heterooligomers with PLPP1 and PLPP3. N-glycosylated.

The protein localises to the membrane. It localises to the cell membrane. Its subcellular location is the early endosome membrane. It is found in the endoplasmic reticulum membrane. It catalyses the reaction a 1,2-diacyl-sn-glycero-3-phosphate + H2O = a 1,2-diacyl-sn-glycerol + phosphate. The enzyme catalyses 1,2-dihexadecanoyl-sn-glycero-3-phosphate + H2O = 1,2-dihexadecanoyl-sn-glycerol + phosphate. It carries out the reaction 1,2-di-(9Z-octadecenoyl)-sn-glycero-3-phosphate + H2O = 1,2-di-(9Z-octadecenoyl)-sn-glycerol + phosphate. The catalysed reaction is a monoacyl-sn-glycero-3-phosphate + H2O = a monoacylglycerol + phosphate. It catalyses the reaction (9Z)-octadecenoyl-sn-glycero-3-phosphate + H2O = (9Z-octadecenoyl)-glycerol + phosphate. The enzyme catalyses sphing-4-enine 1-phosphate + H2O = sphing-4-enine + phosphate. It carries out the reaction an N-acylsphing-4-enine 1-phosphate + H2O = an N-acylsphing-4-enine + phosphate. The catalysed reaction is N-(octanoyl)-sphing-4-enine-1-phosphate + H2O = N-octanoylsphing-4-enine + phosphate. It catalyses the reaction N-(9Z-octadecenoyl)-ethanolamine phosphate + H2O = N-(9Z-octadecenoyl) ethanolamine + phosphate. Its pathway is lipid metabolism; phospholipid metabolism. Magnesium-independent phospholipid phosphatase. Insensitive to N-ethylmaleimide. In terms of biological role, magnesium-independent phospholipid phosphatase that catalyzes the dephosphorylation of a variety of glycerolipid and sphingolipid phosphate esters including phosphatidate/PA, lysophosphatidate/LPA, sphingosine 1-phosphate/S1P and ceramide 1-phosphate/C1P. Has no apparent extracellular phosphatase activity and therefore most probably acts intracellularly. Also acts on N-oleoyl ethanolamine phosphate/N-(9Z-octadecenoyl)-ethanolamine phosphate, a potential physiological compound. Through dephosphorylation of these bioactive lipid mediators produces new bioactive compounds and may regulate signal transduction in different cellular processes. Indirectly regulates, for instance, cell cycle G1/S phase transition through its phospholipid phosphatase activity. This is Phospholipid phosphatase 2 from Bos taurus (Bovine).